Here is an 863-residue protein sequence, read N- to C-terminus: MKSAELRQAFLDYFASQGHTKVSSSSLVPANDPTLLFTNAGMNQFKDVFLGRESRDYTRATSSQRCVRAGGKHNDLENVGYTARHHTFFEMLGNFSFGDYFKREAIKFAWEFLTGTLGLPEERLWVTVHVSDDEAADIWLKEMGVSAERFSRLDEDNFWQMGDTGPCGPSSEIFYDHGADVPGGPPGSADEDLDRYIEIWNLVFMQYDRQPDGELQPLPKPSVDTGMGLERIAAVLQGVHSNYEIDLFQALLQAAAKATGCTDLEEKSLRVIADHIRSASFLICDGVIPSNEGRGYVLRRIIRRALRHGHKLGQDKPFFSTLVAALVAEMGEAYPELGREQARIEKALLAEEEQFGRTLAAGMKVLESAIEQLDGRVLPGDVLFNLYDTHGFPPDLTADVARERDLSVDMDGFEAAMAAQRERARGAGSFANDYSDRLNIDAITDFSGYEKLADDNTVVALYKDGAAVDTLNAGEEGMVVLDRTPFYAESGGQVGDTGALIADEARFMVTDTRKRQAAHVHVGKQVSGSLTIGGKVSACVDVDRRLAVMRNHSATHLMHAALRNVLGEHVQQKGSLVSADYLRFDFSHGEAVSEAQREEIEILVNRQILANTAVTTELMDIESAREAGAMALFGEKYDDQVRVLSMGSDGFSKELCGGTHVNRTGDIGLFRITLEASAAAGVRRIEAVTGEHALAVMRRQERALSEIAATVKSSLDNAADRVRSQAQKVRELEKEIERLKQKLASGAGGDLTSEVQDINGVKVLATQIDGADGKTLRVTMDKLKDKLGSAVIVLAAVEGEKVALVAGVTKDLTTKYKAGDLLKFVAEQVDGRGGGRPDMAQGGGNNPAALPGALESVKAWVAE.

Residues H552, H556, C656, and H660 each contribute to the Zn(2+) site.

This sequence belongs to the class-II aminoacyl-tRNA synthetase family. The cofactor is Zn(2+).

Its subcellular location is the cytoplasm. The catalysed reaction is tRNA(Ala) + L-alanine + ATP = L-alanyl-tRNA(Ala) + AMP + diphosphate. Catalyzes the attachment of alanine to tRNA(Ala) in a two-step reaction: alanine is first activated by ATP to form Ala-AMP and then transferred to the acceptor end of tRNA(Ala). Also edits incorrectly charged Ser-tRNA(Ala) and Gly-tRNA(Ala) via its editing domain. The polypeptide is Alanine--tRNA ligase (Alcanivorax borkumensis (strain ATCC 700651 / DSM 11573 / NCIMB 13689 / SK2)).